The following is a 341-amino-acid chain: Src kinase-associated phosphoprotein 2 (341 aa).

The tract at residues Phe-54–Ser-95 is disordered. Over residues Glu-61–Thr-70 the composition is skewed to acidic residues. Residues Ala-105 to Lys-208 form the PH domain. The disordered stretch occupies residues Glu-246–Pro-265. The region spanning Asp-279–Val-340 is the SH3 domain.

This sequence belongs to the SKAP family. Phosphorylated on tyrosines.

The protein localises to the cytoplasm. May be involved in B-cell and macrophage adhesion processes. May play a role in src signaling pathway. The polypeptide is Src kinase-associated phosphoprotein 2 (skap2) (Danio rerio (Zebrafish)).